Reading from the N-terminus, the 1860-residue chain is Collagen alpha-1(XXVII) chain (1860 aa).

The N-terminal stretch at Met1–Gly41 is a signal peptide. The propeptide at Ala42–Met624 is N-terminal propeptide. The Laminin G-like domain maps to Gln71–Cys236. An N-linked (GlcNAc...) asparagine glycan is attached at Asn271. Disordered regions lie at residues Ala278–Gly608, Gly625–Gly772, and Leu851–Gln1625. 2 stretches are compositionally biased toward polar residues: residues Thr298–His309 and His386–Pro409. Over residues Met432 to Pro445 the composition is skewed to pro residues. Composition is skewed to low complexity over residues Thr446–Leu457 and Thr485–Ala505. Positions Pro509–Arg518 are enriched in polar residues. Low complexity-rich tracts occupy residues Thr572 to Pro588 and Ser599 to Gly608. Collagen-like domains lie at Gly625–Gly679, Gly688–Val747, Gly748–Pro807, Gly808–Pro867, Gly871–Pro930, Gly931–Val990, Gly1003–Lys1062, Gly1066–Lys1125, Gly1126–Arg1185, Gly1192–Lys1251, Gly1258–Val1317, Gly1318–Pro1378, Gly1382–Ala1441, Gly1442–Leu1501, Gly1502–Arg1561, and Gly1562–Pro1621. Residues Gly625 to Pro1618 are triple-helical region. Residues Arg654 to Pro669 show a composition bias toward pro residues. The span at Pro714–Ala734 shows a compositional bias: low complexity. 2 stretches are compositionally biased toward low complexity: residues Phe911–Glu924 and Ala932–Pro944. The segment covering Gly1033–Gly1042 has biased composition (gly residues). The span at Glu1043–Arg1053 shows a compositional bias: pro residues. Positions Glu1130–Pro1142 are enriched in pro residues. Basic and acidic residues-rich tracts occupy residues Leu1202–Gln1220 and Pro1241–Arg1253. 2 stretches are compositionally biased toward basic and acidic residues: residues Lys1326–Ala1338 and Pro1350–Pro1360. The span at Arg1449 to Glu1458 shows a compositional bias: low complexity. Residues Ile1572–Pro1587 show a composition bias toward low complexity. The span at Arg1603–Gly1620 shows a compositional bias: pro residues. Positions Ile1622–Leu1860 are cleaved as a propeptide — C-terminal propeptide. Positions Gly1660 to Leu1860 constitute a Fibrillar collagen NC1 domain. 3 disulfides stabilise this stretch: Cys1690/Cys1722, Cys1731/Cys1858, and Cys1767/Cys1811. Ca(2+) is bound by residues Asp1708, Asn1710, Cys1713, and Asp1716. An N-linked (GlcNAc...) asparagine glycan is attached at Asn1769.

The protein belongs to the fibrillar collagen family.

The protein localises to the secreted. The protein resides in the extracellular space. Its subcellular location is the extracellular matrix. Its function is as follows. Plays a role during the calcification of cartilage and the transition of cartilage to bone. The chain is Collagen alpha-1(XXVII) chain (COL27A1) from Homo sapiens (Human).